The chain runs to 859 residues: Photoactivated adenylate cyclase subunit beta-like protein ST- (859 aa).

The 94-residue stretch at 56–149 (LRRLMYLSKS…GRMYGDWHMK (94 aa)) folds into the BLUF 1 domain. Residues 420 to 444 (RPPIFDDTPKSNPRPRTPGYGGRQR) form a disordered region. Positions 471–563 (LTTLTYISQA…RVYTSEWTLT (93 aa)) constitute a BLUF 2 domain. The tract at residues 814-859 (ARSGEQPLTEPEQAKPDFRVSPGRDRHGVSGRRSNSSQGKGSIQVG) is disordered. Basic and acidic residues predominate over residues 825 to 841 (EQAKPDFRVSPGRDRHG). Residues 845–859 (RRSNSSQGKGSIQVG) show a composition bias toward polar residues.

As to quaternary structure, heterotetramer of two alpha and two beta subunits.

The protein localises to the cell projection. The protein resides in the cilium. It localises to the flagellum. This Euglena gracilis protein is Photoactivated adenylate cyclase subunit beta-like protein ST-.